Consider the following 165-residue polypeptide: Xanthine-guanine phosphoribosyltransferase (165 aa).

5-phospho-alpha-D-ribose 1-diphosphate is bound by residues 41–42 and 98–106; these read RG and DDLTDTGKT. D99 contributes to the Mg(2+) binding site. D102 and I145 together coordinate guanine. The xanthine site is built by D102 and I145. GMP is bound by residues 102–106 and 144–145; these read DTGKT and WI.

The protein belongs to the purine/pyrimidine phosphoribosyltransferase family. XGPT subfamily. In terms of assembly, homotetramer. Requires Mg(2+) as cofactor.

Its subcellular location is the cell inner membrane. It catalyses the reaction GMP + diphosphate = guanine + 5-phospho-alpha-D-ribose 1-diphosphate. The enzyme catalyses XMP + diphosphate = xanthine + 5-phospho-alpha-D-ribose 1-diphosphate. It carries out the reaction IMP + diphosphate = hypoxanthine + 5-phospho-alpha-D-ribose 1-diphosphate. Its pathway is purine metabolism; GMP biosynthesis via salvage pathway; GMP from guanine: step 1/1. It functions in the pathway purine metabolism; XMP biosynthesis via salvage pathway; XMP from xanthine: step 1/1. In terms of biological role, purine salvage pathway enzyme that catalyzes the transfer of the ribosyl-5-phosphate group from 5-phospho-alpha-D-ribose 1-diphosphate (PRPP) to the N9 position of the 6-oxopurines guanine and xanthine to form the corresponding ribonucleotides GMP (guanosine 5'-monophosphate) and XMP (xanthosine 5'-monophosphate), with the release of PPi. To a lesser extent, also acts on hypoxanthine. The polypeptide is Xanthine-guanine phosphoribosyltransferase (Sinorhizobium medicae (strain WSM419) (Ensifer medicae)).